Reading from the N-terminus, the 281-residue chain is uncharacterized protein (281 aa).

The next 4 helical transmembrane spans lie at 8–28 (ALPV…FIWS), 97–117 (LAVA…RGYG), 147–167 (PARI…GLAV), and 210–230 (IASV…IVPA).

The protein to S.pombe bem46 and yeast YNL320w.

It localises to the cell membrane. This is an uncharacterized protein from Mycobacterium tuberculosis (strain ATCC 25618 / H37Rv).